Here is a 355-residue protein sequence, read N- to C-terminus: Protein RecA (355 aa).

ATP is bound at residue 72–79 (GPESSGKT).

Belongs to the RecA family.

The protein resides in the cytoplasm. Its function is as follows. Can catalyze the hydrolysis of ATP in the presence of single-stranded DNA, the ATP-dependent uptake of single-stranded DNA by duplex DNA, and the ATP-dependent hybridization of homologous single-stranded DNAs. It interacts with LexA causing its activation and leading to its autocatalytic cleavage. This chain is Protein RecA, found in Thermosynechococcus vestitus (strain NIES-2133 / IAM M-273 / BP-1).